Reading from the N-terminus, the 336-residue chain is N-lysine methyltransferase KMT5A-B (336 aa).

Disordered regions lie at residues 1-107 (MGRG…SSKQ) and 141-165 (QSQK…NRKL). Basic and acidic residues predominate over residues 67 to 93 (SVAHHESKNLGKPTTETRKKAEVEKKR). A compositionally biased stretch (polar residues) spans 95 to 104 (SSATELSVKS). The segment covering 146 to 162 (VKNKSQRRKAQRKKSPN) has biased composition (basic residues). One can recognise an SET domain in the interval 200-321 (DGMKMDMIIG…VGEELLYDYG (122 aa)). S-adenosyl-L-methionine is bound by residues 210 to 212 (KGR), Tyr255, and 282 to 283 (NH).

The protein belongs to the class V-like SAM-binding methyltransferase superfamily. Histone-lysine methyltransferase family. PR/SET subfamily. In terms of processing, phosphorylated during mitosis.

It localises to the nucleus. The protein localises to the chromosome. The catalysed reaction is L-lysyl(20)-[histone H4] + S-adenosyl-L-methionine = N(6)-methyl-L-lysyl(20)-[histone H4] + S-adenosyl-L-homocysteine + H(+). It catalyses the reaction L-lysyl-[protein] + S-adenosyl-L-methionine = N(6)-methyl-L-lysyl-[protein] + S-adenosyl-L-homocysteine + H(+). Its function is as follows. Protein-lysine N-methyltransferase that monomethylates both histones and non-histone proteins. Specifically monomethylates 'Lys-20' of histone H4 (H4K20me1). H4K20me1 is enriched during mitosis and represents a specific tag for epigenetic transcriptional repression. Mainly functions in euchromatin regions, thereby playing a central role in the silencing of euchromatic genes. Required for cell proliferation, probably by contributing to the maintenance of proper higher-order structure of DNA during mitosis. Involved in chromosome condensation and proper cytokinesis. This is N-lysine methyltransferase KMT5A-B from Xenopus laevis (African clawed frog).